A 509-amino-acid chain; its full sequence is MRKPTALIILDGFGLREETYGNAVAQAKKPNFDGYWNKFPHTTLTACGEAVGLPEGQMGNSEVGHLNIGAGRIVYQSLTRVNVAIREGEFDKNETFQSAIKSVKEKGTALHLFGLLSDGGVHSHMNHMFALLRLAAKEGVEKVYIHAFLDGRDVGPKTAQSYIDATNEVIKETGVGQFATISGRYYSMDRDKRWDRVEKCYRAMVNGEGPTYKSAEECVEDSYANGIYDEFVLPSVIVNEDNTPVATINDDDAVIFYNFRPDRAIQIARVFTNGDFREFDRGEKVPHIPEFVCMTHFSETVDGYVAFKPMNLDNTLGEVVAQAGLKQLRIAETEKYPHVTFFFSGGREAEFPGEERILINSPKVATYDLKPEMSIYEVTDALVNEIENDKHDVIILNFANCDMVGHSGMMEPTIKAVEATDECLGKVVEAILAKDGVALITADHGNADEELTSEGEPMTAHTTNPVPFIVTKNDVELREDGILGDIAPTMLTLLGVEQPKEMTGKTIIK.

Asp11 serves as a coordination point for Mn(2+). Tyr35 is modified (phosphotyrosine). A Mn(2+)-binding site is contributed by Ser61. Ser61 acts as the Phosphoserine intermediate in catalysis. Residues His122, 152 to 153 (RD), Arg184, Arg190, 260 to 263 (RPDR), and Lys335 contribute to the substrate site. Asp402, His406, Asp443, His444, and His461 together coordinate Mn(2+).

Belongs to the BPG-independent phosphoglycerate mutase family. As to quaternary structure, monomer. Requires Mn(2+) as cofactor.

It carries out the reaction (2R)-2-phosphoglycerate = (2R)-3-phosphoglycerate. Its pathway is carbohydrate degradation; glycolysis; pyruvate from D-glyceraldehyde 3-phosphate: step 3/5. Functionally, essential for rapid growth and for sporulation. Catalyzes the interconversion of 2-phosphoglycerate and 3-phosphoglycerate. This Bacillus anthracis protein is 2,3-bisphosphoglycerate-independent phosphoglycerate mutase.